The chain runs to 48 residues: U-reduvitoxin-Pr5a (48 aa).

Residues 1–19 form the signal peptide; sequence MRLFLIFTFIVASLASVYG. 3 disulfide bridges follow: Cys-20–Cys-34, Cys-27–Cys-39, and Cys-33–Cys-44.

It belongs to the venom Ptu1-like knottin family. As to expression, expressed by the venom gland.

The protein resides in the secreted. Binds reversibly and blocks P/Q-type voltage-gated calcium channels (Cav). This is U-reduvitoxin-Pr5a from Platymeris rhadamanthus (Red spot assassin bug).